We begin with the raw amino-acid sequence, 853 residues long: Penicillin-binding protein 1A (853 aa).

Residues 1 to 6 (MRIAKL) lie on the Cytoplasmic side of the membrane. A helical; Signal-anchor for type II membrane protein transmembrane segment spans residues 7–27 (ILNTLLTLCILGLVAGGMLYF). Residues 28-853 (HLKSELQQPM…TPATQPQELF (826 aa)) lie on the Periplasmic side of the membrane. Residues 37 to 205 (MQIYTADGKL…STMNPLYSLK (169 aa)) are transglycosylase. Catalysis depends on Glu75, which acts as the Proton donor; for transglycosylase activity. Positions 387–681 (QRANGEWQLG…RVISGELAFL (295 aa)) are transpeptidase. Ser441 functions as the Acyl-ester intermediate; for transpeptidase activity in the catalytic mechanism. Residues 615-636 (NALKPTDDSTNGEELDQQPETV) form a disordered region.

This sequence in the N-terminal section; belongs to the glycosyltransferase 51 family. In the C-terminal section; belongs to the transpeptidase family.

The protein localises to the cell inner membrane. The catalysed reaction is [GlcNAc-(1-&gt;4)-Mur2Ac(oyl-L-Ala-gamma-D-Glu-L-Lys-D-Ala-D-Ala)](n)-di-trans,octa-cis-undecaprenyl diphosphate + beta-D-GlcNAc-(1-&gt;4)-Mur2Ac(oyl-L-Ala-gamma-D-Glu-L-Lys-D-Ala-D-Ala)-di-trans,octa-cis-undecaprenyl diphosphate = [GlcNAc-(1-&gt;4)-Mur2Ac(oyl-L-Ala-gamma-D-Glu-L-Lys-D-Ala-D-Ala)](n+1)-di-trans,octa-cis-undecaprenyl diphosphate + di-trans,octa-cis-undecaprenyl diphosphate + H(+). The enzyme catalyses Preferential cleavage: (Ac)2-L-Lys-D-Ala-|-D-Ala. Also transpeptidation of peptidyl-alanyl moieties that are N-acyl substituents of D-alanine.. It participates in cell wall biogenesis; peptidoglycan biosynthesis. Functionally, cell wall formation. Synthesis of cross-linked peptidoglycan from the lipid intermediates. The enzyme has a penicillin-insensitive transglycosylase N-terminal domain (formation of linear glycan strands) and a penicillin-sensitive transpeptidase C-terminal domain (cross-linking of the peptide subunits). This is Penicillin-binding protein 1A (mrcA) from Haemophilus influenzae (strain ATCC 51907 / DSM 11121 / KW20 / Rd).